The chain runs to 215 residues: ATP-dependent dethiobiotin synthetase BioD (215 aa).

Residue 13 to 18 (DIGKTV) coordinates ATP. T17 serves as a coordination point for Mg(2+). Residue K38 is part of the active site. T42 provides a ligand contact to substrate. Residues D50, 115–118 (EGAG), and 175–176 (NH) contribute to the ATP site. D50 and E115 together coordinate Mg(2+).

It belongs to the dethiobiotin synthetase family. As to quaternary structure, homodimer. The cofactor is Mg(2+).

Its subcellular location is the cytoplasm. The catalysed reaction is (7R,8S)-7,8-diammoniononanoate + CO2 + ATP = (4R,5S)-dethiobiotin + ADP + phosphate + 3 H(+). It functions in the pathway cofactor biosynthesis; biotin biosynthesis; biotin from 7,8-diaminononanoate: step 1/2. Its function is as follows. Catalyzes a mechanistically unusual reaction, the ATP-dependent insertion of CO2 between the N7 and N8 nitrogen atoms of 7,8-diaminopelargonic acid (DAPA, also called 7,8-diammoniononanoate) to form a ureido ring. This chain is ATP-dependent dethiobiotin synthetase BioD, found in Neisseria meningitidis serogroup B (strain ATCC BAA-335 / MC58).